Reading from the N-terminus, the 95-residue chain is Aspartyl/glutamyl-tRNA(Asn/Gln) amidotransferase subunit C (95 aa).

This sequence belongs to the GatC family. In terms of assembly, heterotrimer of A, B and C subunits.

It catalyses the reaction L-glutamyl-tRNA(Gln) + L-glutamine + ATP + H2O = L-glutaminyl-tRNA(Gln) + L-glutamate + ADP + phosphate + H(+). The enzyme catalyses L-aspartyl-tRNA(Asn) + L-glutamine + ATP + H2O = L-asparaginyl-tRNA(Asn) + L-glutamate + ADP + phosphate + 2 H(+). Functionally, allows the formation of correctly charged Asn-tRNA(Asn) or Gln-tRNA(Gln) through the transamidation of misacylated Asp-tRNA(Asn) or Glu-tRNA(Gln) in organisms which lack either or both of asparaginyl-tRNA or glutaminyl-tRNA synthetases. The reaction takes place in the presence of glutamine and ATP through an activated phospho-Asp-tRNA(Asn) or phospho-Glu-tRNA(Gln). The sequence is that of Aspartyl/glutamyl-tRNA(Asn/Gln) amidotransferase subunit C from Methylorubrum extorquens (strain CM4 / NCIMB 13688) (Methylobacterium extorquens).